The chain runs to 426 residues: D-tagatose-1,6-bisphosphate aldolase subunit KbaZ (426 aa).

It belongs to the GatZ/KbaZ family. KbaZ subfamily. In terms of assembly, forms a complex with KbaY.

Its pathway is carbohydrate metabolism; D-tagatose 6-phosphate degradation; D-glyceraldehyde 3-phosphate and glycerone phosphate from D-tagatose 6-phosphate: step 2/2. Component of the tagatose-1,6-bisphosphate aldolase KbaYZ that is required for full activity and stability of the Y subunit. Could have a chaperone-like function for the proper and stable folding of KbaY. When expressed alone, KbaZ does not show any aldolase activity. The sequence is that of D-tagatose-1,6-bisphosphate aldolase subunit KbaZ from Shigella flexneri.